The sequence spans 121 residues: Small ribosomal subunit protein uS13 (121 aa).

The segment at 91–121 (HRKGLPMRGQRTRTNARTRKGPRKAGVALKK) is disordered.

This sequence belongs to the universal ribosomal protein uS13 family. Part of the 30S ribosomal subunit. Forms a loose heterodimer with protein S19. Forms two bridges to the 50S subunit in the 70S ribosome.

Its function is as follows. Located at the top of the head of the 30S subunit, it contacts several helices of the 16S rRNA. In the 70S ribosome it contacts the 23S rRNA (bridge B1a) and protein L5 of the 50S subunit (bridge B1b), connecting the 2 subunits; these bridges are implicated in subunit movement. Contacts the tRNAs in the A and P-sites. This chain is Small ribosomal subunit protein uS13, found in Cupriavidus taiwanensis (strain DSM 17343 / BCRC 17206 / CCUG 44338 / CIP 107171 / LMG 19424 / R1) (Ralstonia taiwanensis (strain LMG 19424)).